A 257-amino-acid chain; its full sequence is Deoxyribose-phosphate aldolase (257 aa).

Catalysis depends on D102, which acts as the Proton donor/acceptor. The active-site Schiff-base intermediate with acetaldehyde is the K166. The active-site Proton donor/acceptor is the K198.

Belongs to the DeoC/FbaB aldolase family. DeoC type 2 subfamily.

It localises to the cytoplasm. The enzyme catalyses 2-deoxy-D-ribose 5-phosphate = D-glyceraldehyde 3-phosphate + acetaldehyde. It participates in carbohydrate degradation; 2-deoxy-D-ribose 1-phosphate degradation; D-glyceraldehyde 3-phosphate and acetaldehyde from 2-deoxy-alpha-D-ribose 1-phosphate: step 2/2. Catalyzes a reversible aldol reaction between acetaldehyde and D-glyceraldehyde 3-phosphate to generate 2-deoxy-D-ribose 5-phosphate. This is Deoxyribose-phosphate aldolase from Shewanella loihica (strain ATCC BAA-1088 / PV-4).